Reading from the N-terminus, the 1082-residue chain is MDYDTLASKYLKFVYDFEDVTYQNNYFVTDEYKSDLEQYLKSIHDGEKISQSKIDSMETALLTKVPKEKRCLISKLVFAYGKHGNVENKLLKYGTKDALTHAIQKDVKPYENNIITSEIFKDESEYTDTYMDPAINTSCQSNCQAMMFTISEMKLTDIKNATRLEKLFTIVAATINKYGMPRHNIRYRYEWETMKDKPYHLAAWINSSIEMIACVVDHHTYMIARELIVKSFTNRTSLAKLVSSPMTVLTAMLPIRGTVITTENLELEYSSKSVNYLISEEMAEDFMKAIEQLRDEGLEIYQDYYEKWFKSPDPLTFPNIALIYSFSFHVGYRKQALSDAVYDQITVTYDDNVNMEMYKEYSERIENEIFTILKDKVVHEDKRLEEYELSALLSMSSASNGVLREIDFGGQKVRSTKKNMHVIDDMYHKRYTTDIPPVDERNPIPLGRRDVPGRRTRAIFILPYQYFIAQHSFAEMMLKYAKREREYSEFYSQANQVLSYGDVTRYLDSNSILCFTDVSQWDASQHNTRVLRRSIIRAMERLKQLTHNTNIHKAIDIYIQSQKNLENSYVLIDKKAIQYGATASGEKQTKIMNSIANKALIQTVLGKLMTDYTFDVKMIRVDGDDNYAIVRFPTAITEKLLSEFTSKLRSYYSEMNVKVKALASLTGCEIAKRYIAGGMLFFRAGVNILNHEKRNQDSAYDMAATLYANYIVNALRGLTMSRTFILVKICQMTSIKITGTLRLFPMKSILALNSTFKVFDEVDYVINYPISELFIQLQRKLSSIKAKSKIADNIAKSPQFKSYVEFLNKSLTADENPIVSDGIKLTEKAKLNSYAPIALEKRRDQFNMMVSFLQNPTTFKSETVVTINDVLYFISGFIKINSSVALPKEENNTMPLLPVTIKRTLNYFGLRTHDYDIKGSSSTMSKIIKQYSVYTPGIEELYEVVNKSIDSIRGYFASFNVPKADVDTYISTQMYKHDRFKILQAYIYNLLSVNYGMYQLVDLNSAKFFDHVIHTPMAKTPTAVFMIDLALRLKVINHCIEKGEVITVSVHANKTDYLKLWRMLWNVKTMNSPYSKNSMFDE.

One can recognise a RdRp catalytic domain in the interval 498 to 670; it reads LSYGDVTRYL…ALASLTGCEI (173 aa).

Belongs to the reoviridae RNA-directed RNA polymerase family. As to quaternary structure, interacts with VP3 (Potential). Interacts with VP2; this interaction activates VP1. Interacts with NSP5; this interaction is probably necessary for the formation of functional virus factories. Interacts with NSP2; this interaction is weak. Mg(2+) serves as cofactor.

Its subcellular location is the virion. The enzyme catalyses RNA(n) + a ribonucleoside 5'-triphosphate = RNA(n+1) + diphosphate. Its function is as follows. RNA-directed RNA polymerase that is involved in both transcription and genome replication. Together with VP3 capping enzyme, forms an enzyme complex positioned near the channels situated at each of the five-fold vertices of the core. Following infection, the outermost layer of the virus is lost, leaving a double-layered particle (DLP) made up of the core and VP6 shell. VP1 then catalyzes the transcription of fully conservative plus-strand genomic RNAs that are extruded through the DLP's channels into the cytoplasm where they function as mRNAs for translation of viral proteins. One copy of each of the viral (+)RNAs is also recruited during core assembly, together with newly synthesized polymerase complexes and VP2. The polymerase of these novo-formed particles catalyzes the synthesis of complementary minus-strands leading to dsDNA formation. To do so, the polymerase specifically recognizes conserved 3' sequence(s) in plus-strand RNA templates. Once dsRNA synthesis is complete, the polymerase switches to the transcriptional mode, thus providing secondary transcription. In Rotavirus C (strain RVC/Pig/United States/Cowden/1980) (RV-C), this protein is RNA-directed RNA polymerase.